The chain runs to 350 residues: Eukaryotic translation initiation factor 3 subunit I (350 aa).

WD repeat units follow at residues 8–49, 51–89, 91–135, 149–188, 198–240, and 296–335; these read GHER…GTLE, HQGV…CVFT, ESPS…ESLT, QDGA…AVNS, EKNV…KVYK, and GHFG…FDFY.

Belongs to the eIF-3 subunit I family. Component of the eukaryotic translation initiation factor 3 (eIF-3) complex.

It is found in the cytoplasm. In terms of biological role, component of the eukaryotic translation initiation factor 3 (eIF-3) complex, which is involved in protein synthesis of a specialized repertoire of mRNAs and, together with other initiation factors, stimulates binding of mRNA and methionyl-tRNAi to the 40S ribosome. The eIF-3 complex specifically targets and initiates translation of a subset of mRNAs involved in cell proliferation. The polypeptide is Eukaryotic translation initiation factor 3 subunit I (Scheffersomyces stipitis (strain ATCC 58785 / CBS 6054 / NBRC 10063 / NRRL Y-11545) (Yeast)).